Here is a 158-residue protein sequence, read N- to C-terminus: Protein Smg homolog (158 aa).

It belongs to the Smg family.

The sequence is that of Protein Smg homolog from Thioalkalivibrio sulfidiphilus (strain HL-EbGR7).